Consider the following 369-residue polypeptide: MTATDPAPTRPIWLADDKKRVQIIDQRMLPHNLVIVDLTTVDQVIEAIGEMMVRGAPLIGVTGAFGVFIAVQNALERGDFEAQVRKECLRIKEARPTAVNLAWGVDRVCAAVFSKTLPADCLAAALAEASAIAEEEVDNCRRIGVHGVGLIETISRQKGGKTVNVLTHCNAGWLACVEHGTATAPIYKAFEKRIDIHVWVDETRPLNQGARLTAWELGQRGVAHTVITDNAGGHLMQHGMVDMVIVGTDRSTYTGDVANKVGTYLKALAARDNNIPFYVALPSSTFDWEMTDGLAQIPIEERNPDEVRCVEGLCPDGRVEKVRIVPENSRAANYAFDVTPARLVTGFITERGVCGAGRDQVLALFPEKR.

Substrate is bound by residues 54–56, R95, and Q208; that span reads RGA. D249 serves as the catalytic Proton donor. Position 259-260 (259-260) interacts with substrate; the sequence is NK.

This sequence belongs to the eIF-2B alpha/beta/delta subunits family. MtnA subfamily.

The catalysed reaction is 5-(methylsulfanyl)-alpha-D-ribose 1-phosphate = 5-(methylsulfanyl)-D-ribulose 1-phosphate. Its pathway is amino-acid biosynthesis; L-methionine biosynthesis via salvage pathway; L-methionine from S-methyl-5-thio-alpha-D-ribose 1-phosphate: step 1/6. In terms of biological role, catalyzes the interconversion of methylthioribose-1-phosphate (MTR-1-P) into methylthioribulose-1-phosphate (MTRu-1-P). In Desulfosudis oleivorans (strain DSM 6200 / JCM 39069 / Hxd3) (Desulfococcus oleovorans), this protein is Methylthioribose-1-phosphate isomerase.